Consider the following 691-residue polypeptide: Elongation factor G (691 aa).

The region spanning 8–282 (ERVRNIGIAA…AVVDYLPAPV (275 aa)) is the tr-type G domain. Residues 17-24 (AHIDAGKT), 81-85 (DTPGH), and 135-138 (NKMD) each bind GTP.

Belongs to the TRAFAC class translation factor GTPase superfamily. Classic translation factor GTPase family. EF-G/EF-2 subfamily.

Its subcellular location is the cytoplasm. In terms of biological role, catalyzes the GTP-dependent ribosomal translocation step during translation elongation. During this step, the ribosome changes from the pre-translocational (PRE) to the post-translocational (POST) state as the newly formed A-site-bound peptidyl-tRNA and P-site-bound deacylated tRNA move to the P and E sites, respectively. Catalyzes the coordinated movement of the two tRNA molecules, the mRNA and conformational changes in the ribosome. The polypeptide is Elongation factor G (Prochlorococcus marinus (strain MIT 9211)).